A 208-amino-acid polypeptide reads, in one-letter code: Large ribosomal subunit protein uL3 (208 aa).

The segment at 122–148 (KRHGQSRGPMAHGSRYHRRPGSMGPVA) is disordered.

This sequence belongs to the universal ribosomal protein uL3 family. As to quaternary structure, part of the 50S ribosomal subunit. Forms a cluster with proteins L14 and L19.

One of the primary rRNA binding proteins, it binds directly near the 3'-end of the 23S rRNA, where it nucleates assembly of the 50S subunit. In Streptococcus pyogenes serotype M1, this protein is Large ribosomal subunit protein uL3.